The sequence spans 277 residues: Bifunctional protein FolD (277 aa).

NADP(+) is bound by residues 164–166, S189, and T230; that span reads GRS.

The protein belongs to the tetrahydrofolate dehydrogenase/cyclohydrolase family. Homodimer.

The catalysed reaction is (6R)-5,10-methylene-5,6,7,8-tetrahydrofolate + NADP(+) = (6R)-5,10-methenyltetrahydrofolate + NADPH. It catalyses the reaction (6R)-5,10-methenyltetrahydrofolate + H2O = (6R)-10-formyltetrahydrofolate + H(+). It functions in the pathway one-carbon metabolism; tetrahydrofolate interconversion. In terms of biological role, catalyzes the oxidation of 5,10-methylenetetrahydrofolate to 5,10-methenyltetrahydrofolate and then the hydrolysis of 5,10-methenyltetrahydrofolate to 10-formyltetrahydrofolate. The chain is Bifunctional protein FolD from Clostridium perfringens (strain 13 / Type A).